The chain runs to 1109 residues: Hybrid signal transduction histidine kinase F (1109 aa).

Residues 237-289 (LSTETTITKKNGEKYPAEVFVKEISDIHSNSIGIMIIVRDITDQIRLKEMNIE) enclose the PAC domain. The 224-residue stretch at 324 to 547 (TISHEIRTPL…LFSVTLNFEQ (224 aa)) folds into the Histidine kinase domain. The residue at position 327 (H327) is a Phosphohistidine; by autocatalysis. The stretch at 719–760 (SNLIQTISQIDNQQQQQQQQLQQQEQEQQHQQQQLQQEQQFV) forms a coiled coil. Low complexity predominate over residues 739-758 (LQQQEQEQQHQQQQLQQEQQ). The segment at 739–819 (LQQQEQEQQH…TSSDSGESDE (81 aa)) is disordered. Basic and acidic residues predominate over residues 767 to 782 (DSSEKKTTPKKDRGKY). Positions 928-1048 (RILLVDDNAV…PLGELVKKYL (121 aa)) constitute a Response regulatory domain. Position 977 is a 4-aspartylphosphate (D977). The segment covering 1052 to 1099 (NNNNNNNNNNNNNNNNNSNNNNSNSNSNPNSNSNSNSNSNSNPNQNPN) has biased composition (low complexity). The disordered stretch occupies residues 1052 to 1109 (NNNNNNNNNNNNNNNNNSNNNNSNSNSNPNSNSNSNSNSNSNPNQNPNYCNNLPTDFI). The segment covering 1100–1109 (YCNNLPTDFI) has biased composition (polar residues).

The enzyme catalyses ATP + protein L-histidine = ADP + protein N-phospho-L-histidine.. Its function is as follows. Acts as a receptor histidine kinase for a signal transduction pathway. This protein undergoes an ATP-dependent autophosphorylation at a conserved histidine residue in the kinase core, and a phosphoryl group is then transferred to a conserved aspartate residue in the receiver domain. The sequence is that of Hybrid signal transduction histidine kinase F (dhkF) from Dictyostelium discoideum (Social amoeba).